The chain runs to 110 residues: Phosphoribosyl-AMP cyclohydrolase (110 aa).

Aspartate 80 is a binding site for Mg(2+). Cysteine 81 is a binding site for Zn(2+). Residues aspartate 82 and aspartate 84 each coordinate Mg(2+). Zn(2+) contacts are provided by cysteine 97 and cysteine 104.

It belongs to the PRA-CH family. In terms of assembly, homodimer. The cofactor is Mg(2+). It depends on Zn(2+) as a cofactor.

Its subcellular location is the cytoplasm. The catalysed reaction is 1-(5-phospho-beta-D-ribosyl)-5'-AMP + H2O = 1-(5-phospho-beta-D-ribosyl)-5-[(5-phospho-beta-D-ribosylamino)methylideneamino]imidazole-4-carboxamide. The protein operates within amino-acid biosynthesis; L-histidine biosynthesis; L-histidine from 5-phospho-alpha-D-ribose 1-diphosphate: step 3/9. Its function is as follows. Catalyzes the hydrolysis of the adenine ring of phosphoribosyl-AMP. The polypeptide is Phosphoribosyl-AMP cyclohydrolase (Clostridium botulinum (strain ATCC 19397 / Type A)).